A 293-amino-acid polypeptide reads, in one-letter code: 4-hydroxy-tetrahydrodipicolinate synthase (293 aa).

Thr45 is a binding site for pyruvate. Tyr133 functions as the Proton donor/acceptor in the catalytic mechanism. Lys161 functions as the Schiff-base intermediate with substrate in the catalytic mechanism. Ile203 is a binding site for pyruvate.

Belongs to the DapA family. As to quaternary structure, homotetramer; dimer of dimers.

The protein resides in the cytoplasm. The catalysed reaction is L-aspartate 4-semialdehyde + pyruvate = (2S,4S)-4-hydroxy-2,3,4,5-tetrahydrodipicolinate + H2O + H(+). Its pathway is amino-acid biosynthesis; L-lysine biosynthesis via DAP pathway; (S)-tetrahydrodipicolinate from L-aspartate: step 3/4. Catalyzes the condensation of (S)-aspartate-beta-semialdehyde [(S)-ASA] and pyruvate to 4-hydroxy-tetrahydrodipicolinate (HTPA). The sequence is that of 4-hydroxy-tetrahydrodipicolinate synthase from Shewanella piezotolerans (strain WP3 / JCM 13877).